We begin with the raw amino-acid sequence, 197 residues long: Dephospho-CoA kinase (197 aa).

Residues 2–197 (IIGITGGIAS…SALLLLANPR (196 aa)) enclose the DPCK domain. 10–15 (ASGKST) contacts ATP.

Belongs to the CoaE family.

It localises to the cytoplasm. It catalyses the reaction 3'-dephospho-CoA + ATP = ADP + CoA + H(+). It functions in the pathway cofactor biosynthesis; coenzyme A biosynthesis; CoA from (R)-pantothenate: step 5/5. In terms of biological role, catalyzes the phosphorylation of the 3'-hydroxyl group of dephosphocoenzyme A to form coenzyme A. This is Dephospho-CoA kinase from Streptococcus pyogenes serotype M1.